Here is a 163-residue protein sequence, read N- to C-terminus: Crossover junction endodeoxyribonuclease RuvC (163 aa).

Catalysis depends on residues aspartate 9, glutamate 76, and aspartate 148. Mg(2+) is bound by residues aspartate 9, glutamate 76, and aspartate 148.

The protein belongs to the RuvC family. Homodimer which binds Holliday junction (HJ) DNA. The HJ becomes 2-fold symmetrical on binding to RuvC with unstacked arms; it has a different conformation from HJ DNA in complex with RuvA. In the full resolvosome a probable DNA-RuvA(4)-RuvB(12)-RuvC(2) complex forms which resolves the HJ. It depends on Mg(2+) as a cofactor.

Its subcellular location is the cytoplasm. It catalyses the reaction Endonucleolytic cleavage at a junction such as a reciprocal single-stranded crossover between two homologous DNA duplexes (Holliday junction).. In terms of biological role, the RuvA-RuvB-RuvC complex processes Holliday junction (HJ) DNA during genetic recombination and DNA repair. Endonuclease that resolves HJ intermediates. Cleaves cruciform DNA by making single-stranded nicks across the HJ at symmetrical positions within the homologous arms, yielding a 5'-phosphate and a 3'-hydroxyl group; requires a central core of homology in the junction. The consensus cleavage sequence is 5'-(A/T)TT(C/G)-3'. Cleavage occurs on the 3'-side of the TT dinucleotide at the point of strand exchange. HJ branch migration catalyzed by RuvA-RuvB allows RuvC to scan DNA until it finds its consensus sequence, where it cleaves and resolves the cruciform DNA. The sequence is that of Crossover junction endodeoxyribonuclease RuvC from Nostoc sp. (strain PCC 7120 / SAG 25.82 / UTEX 2576).